A 415-amino-acid chain; its full sequence is Probable peptidoglycan glycosyltransferase FtsW (415 aa).

11 helical membrane passes run proline 31–alanine 51, phenylalanine 63–leucine 83, leucine 97–histidine 117, isoleucine 133–threonine 153, isoleucine 162–glutamine 182, phenylalanine 185–glutamine 205, tryptophan 206–serine 226, phenylalanine 245–glycine 265, phenylalanine 285–leucine 305, isoleucine 326–asparagine 346, and leucine 361–leucine 381.

It belongs to the SEDS family. FtsW subfamily.

Its subcellular location is the cell inner membrane. It catalyses the reaction [GlcNAc-(1-&gt;4)-Mur2Ac(oyl-L-Ala-gamma-D-Glu-L-Lys-D-Ala-D-Ala)](n)-di-trans,octa-cis-undecaprenyl diphosphate + beta-D-GlcNAc-(1-&gt;4)-Mur2Ac(oyl-L-Ala-gamma-D-Glu-L-Lys-D-Ala-D-Ala)-di-trans,octa-cis-undecaprenyl diphosphate = [GlcNAc-(1-&gt;4)-Mur2Ac(oyl-L-Ala-gamma-D-Glu-L-Lys-D-Ala-D-Ala)](n+1)-di-trans,octa-cis-undecaprenyl diphosphate + di-trans,octa-cis-undecaprenyl diphosphate + H(+). It participates in cell wall biogenesis; peptidoglycan biosynthesis. Functionally, peptidoglycan polymerase that is essential for cell division. This chain is Probable peptidoglycan glycosyltransferase FtsW, found in Halothiobacillus neapolitanus (strain ATCC 23641 / c2) (Thiobacillus neapolitanus).